The sequence spans 257 residues: Thiazole synthase (257 aa).

K95 serves as the catalytic Schiff-base intermediate with DXP. 1-deoxy-D-xylulose 5-phosphate is bound by residues G156, 182–183 (AG), and 204–205 (NT).

The protein belongs to the ThiG family. Homotetramer. Forms heterodimers with either ThiH or ThiS.

The protein resides in the cytoplasm. The catalysed reaction is [ThiS sulfur-carrier protein]-C-terminal-Gly-aminoethanethioate + 2-iminoacetate + 1-deoxy-D-xylulose 5-phosphate = [ThiS sulfur-carrier protein]-C-terminal Gly-Gly + 2-[(2R,5Z)-2-carboxy-4-methylthiazol-5(2H)-ylidene]ethyl phosphate + 2 H2O + H(+). It functions in the pathway cofactor biosynthesis; thiamine diphosphate biosynthesis. Catalyzes the rearrangement of 1-deoxy-D-xylulose 5-phosphate (DXP) to produce the thiazole phosphate moiety of thiamine. Sulfur is provided by the thiocarboxylate moiety of the carrier protein ThiS. In vitro, sulfur can be provided by H(2)S. This is Thiazole synthase from Vibrio vulnificus (strain CMCP6).